Reading from the N-terminus, the 316-residue chain is Transaldolase (316 aa).

Catalysis depends on K132, which acts as the Schiff-base intermediate with substrate.

It belongs to the transaldolase family. Type 1 subfamily. As to quaternary structure, homodimer.

The protein resides in the cytoplasm. It carries out the reaction D-sedoheptulose 7-phosphate + D-glyceraldehyde 3-phosphate = D-erythrose 4-phosphate + beta-D-fructose 6-phosphate. It participates in carbohydrate degradation; pentose phosphate pathway; D-glyceraldehyde 3-phosphate and beta-D-fructose 6-phosphate from D-ribose 5-phosphate and D-xylulose 5-phosphate (non-oxidative stage): step 2/3. Functionally, transaldolase is important for the balance of metabolites in the pentose-phosphate pathway. In Marinomonas sp. (strain MWYL1), this protein is Transaldolase.